Here is a 288-residue protein sequence, read N- to C-terminus: UDP-3-O-acyl-N-acetylglucosamine deacetylase (288 aa).

Zn(2+) contacts are provided by histidine 79, histidine 236, and aspartate 240. Histidine 263 serves as the catalytic Proton donor.

This sequence belongs to the LpxC family. It depends on Zn(2+) as a cofactor.

It catalyses the reaction a UDP-3-O-[(3R)-3-hydroxyacyl]-N-acetyl-alpha-D-glucosamine + H2O = a UDP-3-O-[(3R)-3-hydroxyacyl]-alpha-D-glucosamine + acetate. Its pathway is glycolipid biosynthesis; lipid IV(A) biosynthesis; lipid IV(A) from (3R)-3-hydroxytetradecanoyl-[acyl-carrier-protein] and UDP-N-acetyl-alpha-D-glucosamine: step 2/6. Its function is as follows. Catalyzes the hydrolysis of UDP-3-O-myristoyl-N-acetylglucosamine to form UDP-3-O-myristoylglucosamine and acetate, the committed step in lipid A biosynthesis. This chain is UDP-3-O-acyl-N-acetylglucosamine deacetylase, found in Rickettsia conorii (strain ATCC VR-613 / Malish 7).